The following is a 109-amino-acid chain: Phosphoribosyl-AMP cyclohydrolase (109 aa).

Position 80 (aspartate 80) interacts with Mg(2+). Position 81 (cysteine 81) interacts with Zn(2+). Residues aspartate 82 and aspartate 84 each coordinate Mg(2+). Residues cysteine 97 and cysteine 104 each coordinate Zn(2+).

It belongs to the PRA-CH family. In terms of assembly, homodimer. Mg(2+) is required as a cofactor. Zn(2+) serves as cofactor.

It localises to the cytoplasm. It catalyses the reaction 1-(5-phospho-beta-D-ribosyl)-5'-AMP + H2O = 1-(5-phospho-beta-D-ribosyl)-5-[(5-phospho-beta-D-ribosylamino)methylideneamino]imidazole-4-carboxamide. Its pathway is amino-acid biosynthesis; L-histidine biosynthesis; L-histidine from 5-phospho-alpha-D-ribose 1-diphosphate: step 3/9. Its function is as follows. Catalyzes the hydrolysis of the adenine ring of phosphoribosyl-AMP. The chain is Phosphoribosyl-AMP cyclohydrolase from Clostridium botulinum (strain Alaska E43 / Type E3).